The following is a 181-amino-acid chain: Ribulose bisphosphate carboxylase small subunit, chloroplastic 1 (181 aa).

A chloroplast-targeting transit peptide spans 1-57 (MASSIVSSAAVATRSNVAQASMVAPFTGLKSAASFPVTKKNNNVDITSLASNGGRVR).

The protein belongs to the RuBisCO small chain family. In terms of assembly, heterohexadecamer of 8 large and 8 small subunits.

It is found in the plastid. It localises to the chloroplast. Functionally, ruBisCO catalyzes two reactions: the carboxylation of D-ribulose 1,5-bisphosphate, the primary event in carbon dioxide fixation, as well as the oxidative fragmentation of the pentose substrate. Both reactions occur simultaneously and in competition at the same active site. Although the small subunit is not catalytic it is essential for maximal activity. The chain is Ribulose bisphosphate carboxylase small subunit, chloroplastic 1 from Solanum tuberosum (Potato).